The chain runs to 305 residues: Glycine--tRNA ligase alpha subunit (305 aa).

It belongs to the class-II aminoacyl-tRNA synthetase family. In terms of assembly, tetramer of two alpha and two beta subunits.

The protein localises to the cytoplasm. The enzyme catalyses tRNA(Gly) + glycine + ATP = glycyl-tRNA(Gly) + AMP + diphosphate. The protein is Glycine--tRNA ligase alpha subunit of Streptococcus pneumoniae (strain CGSP14).